Reading from the N-terminus, the 466-residue chain is tRNA-2-methylthio-N(6)-dimethylallyladenosine synthase (466 aa).

The MTTase N-terminal domain maps to 22 to 139 (RRYYVWTVGC…VVALAPNPIY (118 aa)). The [4Fe-4S] cluster site is built by cysteine 31, cysteine 67, cysteine 101, cysteine 166, cysteine 170, and cysteine 173. In terms of domain architecture, Radical SAM core spans 152–386 (SHPPVSVHVP…EQLQEQIATE (235 aa)). Residues 389 to 449 (ARFLGQTVEV…PWSLQGVPQL (61 aa)) enclose the TRAM domain.

Belongs to the methylthiotransferase family. MiaB subfamily. As to quaternary structure, monomer. Requires [4Fe-4S] cluster as cofactor.

Its subcellular location is the cytoplasm. The enzyme catalyses N(6)-dimethylallyladenosine(37) in tRNA + (sulfur carrier)-SH + AH2 + 2 S-adenosyl-L-methionine = 2-methylsulfanyl-N(6)-dimethylallyladenosine(37) in tRNA + (sulfur carrier)-H + 5'-deoxyadenosine + L-methionine + A + S-adenosyl-L-homocysteine + 2 H(+). Its function is as follows. Catalyzes the methylthiolation of N6-(dimethylallyl)adenosine (i(6)A), leading to the formation of 2-methylthio-N6-(dimethylallyl)adenosine (ms(2)i(6)A) at position 37 in tRNAs that read codons beginning with uridine. The sequence is that of tRNA-2-methylthio-N(6)-dimethylallyladenosine synthase from Chloroflexus aurantiacus (strain ATCC 29366 / DSM 635 / J-10-fl).